The primary structure comprises 53 residues: Sec-independent protein translocase protein TatA (53 aa).

Residues 1–21 (MGMSVSHLLIVLLIIFVLFGA) form a helical membrane-spanning segment.

Belongs to the TatA/E family. In terms of assembly, the Tat system comprises two distinct complexes: a TatABC complex, containing multiple copies of TatA, TatB and TatC subunits, and a separate TatA complex, containing only TatA subunits. Substrates initially bind to the TatABC complex, which probably triggers association of the separate TatA complex to form the active translocon.

Its subcellular location is the cell inner membrane. Functionally, part of the twin-arginine translocation (Tat) system that transports large folded proteins containing a characteristic twin-arginine motif in their signal peptide across membranes. TatA could form the protein-conducting channel of the Tat system. The protein is Sec-independent protein translocase protein TatA of Rickettsia massiliae (strain Mtu5).